The following is a 254-amino-acid chain: MIALLSPAKTLDLTKPNLDIETSKPIFISEAEVIMNNLKELEIQDLCPLMKISEDLGVQTFTKIQDWNTIYYGDEKPFVLSFKGEAYRGLDADDFTKEDLEFCNDSLRILSGLYGALKPLDGTKAYRLEMGTKISIDGSKNLYDFWGNKIMDSLLKDLENHKEKVIINLASNEYYKSIKQIDKKVRVITPVFKERKGIEYKVVTVYAKKARGQMVRYITKNRITKSEDLKNFDLYGYEFNERLSEGDTWVFTRD.

It belongs to the UPF0246 family.

The chain is UPF0246 protein CPR_2119 from Clostridium perfringens (strain SM101 / Type A).